We begin with the raw amino-acid sequence, 473 residues long: Phosphatidylserine synthase 1 (473 aa).

At A2 the chain carries N-acetylalanine. The Cytoplasmic portion of the chain corresponds to 2–35; sequence ASCVGSRTLSKDDVNYKMHFRMINEQQVEDITID. Residues 36-56 traverse the membrane as a helical segment; the sequence is FFYRPHTITLLSFTIVSLMYF. Residues 57–72 are Lumenal-facing; sequence AFTRDDSVPEDNIWRG. The helical transmembrane segment at 73 to 93 threads the bilayer; sequence ILSVIFFFLIISVLAFPNGPF. Residues 94–102 lie on the Cytoplasmic side of the membrane; that stretch reads TRPHPALWR. The chain crosses the membrane as a helical span at residues 103-123; sequence MVFGLSVLYFLFLVFLLFLNF. Residues 124-186 lie on the Lumenal side of the membrane; the sequence is EQVKSLMYWL…AMKALLIRSY (63 aa). A helical membrane pass occupies residues 187–207; sequence GLCWTISITWELTELFFMHLL. Over 208–216 the chain is Cytoplasmic; that stretch reads PNFAECWWD. A helical transmembrane segment spans residues 217–237; that stretch reads QVILDILLCNGGGIWLGMVVC. The Lumenal segment spans residues 238–286; that stretch reads RFLEMRTYHWASFKDIHTTTGKIKRAVLQFTPASWTYVRWFDPKSSFQR. Residues 287 to 307 form a helical membrane-spanning segment; the sequence is VAGVYLFMIIWQLTELNTFFL. Over 308–319 the chain is Cytoplasmic; sequence KHIFVFQASHPL. A helical membrane pass occupies residues 320-342; the sequence is SWGRILFIGGITAPTVRQYYAYL. At 343–355 the chain is on the lumenal side; the sequence is TDTQCKRVGTQCW. The helical transmembrane segment at 356–376 threads the bilayer; the sequence is VFGVIGFLEAIVCIKFGQDLF. At 377–383 the chain is on the cytoplasmic side; it reads SKTQILY. A helical membrane pass occupies residues 384 to 404; the sequence is VVLWLLCVAFTTFLCLYGMIW. At 405 to 473 the chain is on the lumenal side; sequence YAEHYGHREK…SKVTNGVGKK (69 aa). S417, S425, S442, and S454 each carry phosphoserine. Residues 430–473 form a disordered region; it reads WHHRKGTKGSEDSPPKHAGNNESHSSRRRNRHSKSKVTNGVGKK. Over residues 455–464 the composition is skewed to basic residues; sequence SRRRNRHSKS.

The protein belongs to the phosphatidyl serine synthase family.

The protein resides in the endoplasmic reticulum membrane. The enzyme catalyses a 1,2-diacyl-sn-glycero-3-phosphoethanolamine + L-serine = a 1,2-diacyl-sn-glycero-3-phospho-L-serine + ethanolamine. The catalysed reaction is a 1,2-diacyl-sn-glycero-3-phosphocholine + L-serine = a 1,2-diacyl-sn-glycero-3-phospho-L-serine + choline. It participates in phospholipid metabolism; phosphatidylserine biosynthesis. Requires calcium ions. Inhibited by exogenous phosphatidylserine. Catalyzes a base-exchange reaction in which the polar head group of phosphatidylethanolamine (PE) or phosphatidylcholine (PC) is replaced by L-serine. Catalyzes mainly the conversion of phosphatidylcholine. Also converts, in vitro and to a lesser extent, phosphatidylethanolamine. This chain is Phosphatidylserine synthase 1 (PTDSS1), found in Homo sapiens (Human).